The following is a 58-amino-acid chain: UPF0434 protein Swoo_1821 (58 aa).

The protein belongs to the UPF0434 family.

This chain is UPF0434 protein Swoo_1821, found in Shewanella woodyi (strain ATCC 51908 / MS32).